We begin with the raw amino-acid sequence, 487 residues long: Aromatic-L-amino-acid decarboxylase (487 aa).

N-acetylmethionine is present on Met-1. Repeat copies occupy residues 58–115 and 118–178. Residues 58-178 are 2 X approximate tandem repeats; sequence EDIEKIIMPG…AASPELMQAA (121 aa). Residue Thr-82 participates in substrate binding. Ala-148 and Ser-149 together coordinate pyridoxal 5'-phosphate. A substrate-binding site is contributed by His-192. 2 residues coordinate pyridoxal 5'-phosphate: Thr-246 and Asn-300. Lys-303 bears the N6-(pyridoxal phosphate)lysine mark.

The protein belongs to the group II decarboxylase family. As to quaternary structure, homodimer. Pyridoxal 5'-phosphate serves as cofactor.

The catalysed reaction is L-dopa + H(+) = dopamine + CO2. It catalyses the reaction 5-hydroxy-L-tryptophan + H(+) = serotonin + CO2. The protein operates within catecholamine biosynthesis; dopamine biosynthesis; dopamine from L-tyrosine: step 2/2. In terms of biological role, catalyzes the decarboxylation of L-3,4-dihydroxyphenylalanine (DOPA) to dopamine and L-5-hydroxytryptophan to serotonin. The protein is Aromatic-L-amino-acid decarboxylase (DDC) of Bos taurus (Bovine).